The sequence spans 542 residues: MAKTPAKAPAAAAKPAAVKKPAAPKAAAAPKAAAVATPAAKKPAAPKAAPVSKVAGTREKPDTIRAGTGKLVQVIGAVVDVEFTGELPAILNALETVNIATGQRLVFEVAQHLGQNTVRAIAMDATEGLVRGQEVRDTGQSIRVPVGPGTLGRIMNVIGEPIDEQGPIKSDIFRTIHRDAPTFAEQTNTAEVLVTGIKVIDLMCPYTKGGKIGLFGGAGVGKTVTMQELINNIAKAYGGYSVLAGVGERTREGNDLYHEMIESNVNVDPKINGSTEGSRCALVYGQMNEPPGARARVALTGLSIAEYFRDEEGKDVLLFVDNIFRFTQAGAEVSALLGRIPSAVGYQPTLATEMGNLQERITSTNKGSITSVQAIYVPADDLTDPAPAASFAHLDATTVLSRDIAAQAIFPAVDPLDSTSRIMDPLIIGQEHYDVARSVQEVLQQYKSLKDIIAILGMDELSEEDKLTVARARKISRFLSQPFHVAEQFTNTPGAFVSLKDTIRSFKGIVDGEYDHLPEAAFYMVGPIEEAVAKAEKLAGEA.

A compositionally biased stretch (low complexity) spans 1–50 (MAKTPAKAPAAAAKPAAVKKPAAPKAAAAPKAAAVATPAAKKPAAPKAAP). A disordered region spans residues 1–61 (MAKTPAKAPA…SKVAGTREKP (61 aa)). Residue 216–223 (GGAGVGKT) participates in ATP binding.

Belongs to the ATPase alpha/beta chains family. In terms of assembly, F-type ATPases have 2 components, CF(1) - the catalytic core - and CF(0) - the membrane proton channel. CF(1) has five subunits: alpha(3), beta(3), gamma(1), delta(1), epsilon(1). CF(0) has three main subunits: a(1), b(2) and c(9-12). The alpha and beta chains form an alternating ring which encloses part of the gamma chain. CF(1) is attached to CF(0) by a central stalk formed by the gamma and epsilon chains, while a peripheral stalk is formed by the delta and b chains.

Its subcellular location is the cell inner membrane. The enzyme catalyses ATP + H2O + 4 H(+)(in) = ADP + phosphate + 5 H(+)(out). Produces ATP from ADP in the presence of a proton gradient across the membrane. The catalytic sites are hosted primarily by the beta subunits. In Caulobacter sp. (strain K31), this protein is ATP synthase subunit beta.